We begin with the raw amino-acid sequence, 664 residues long: DCC-interacting protein 13-beta (664 aa).

Positions 1-428 are required for RAB5A binding; that stretch reads MPAVDKLLLE…NSEMENENDK (428 aa). The 266-residue stretch at 3–268 folds into the BAR domain; it reads AVDKLLLEEA…ESVYTPDSDV (266 aa). In terms of domain architecture, PH spans 277-375; the sequence is LIQKAGYLNL…WICAINNISR (99 aa). Residues 488 to 637 form the PID domain; sequence SLLQQMFIVR…LMLSIPLTND (150 aa). A disordered region spans residues 643–664; it reads LNDQPDDDDGNPNEHRGAESEA. The segment covering 654–664 has biased composition (basic and acidic residues); that stretch reads PNEHRGAESEA.

Homodimer. Homotetramer. Binds RAB5A/Rab5 through an N-terminal domain. This interaction is essential for its recruitment to endosomal membranes as well as its role in cell proliferation. Binds subunits of the NuRD/MeCP1 complex. Interacts with FSHR; interaction is independent of follicle stimulating hormone stimulation. Interacts with APPL1; the interaction is decreased by adiponectin in a time-dependent manner. Forms a complex comprising APPL1, RUVBL2, CTNNB1, HDAC1 and HDAC2; interaction reduces interaction between CTNNB1, HDAC1, HDAC2 and RUVBL2 leading to the decrease of deacetylase activity of this complex; affects the recruitment of repressive complexes to the Wnt target genes. Interacts (via BAR domain) with TBC1D1; interaction is dependent of TBC1D1 phosphorylation at 'Ser-235'; interaction diminishes the phosphorylation of TBC1D1 at 'Thr-596', resulting in inhibition of SLC2A4 translocation and glucose uptake. Interacts with ANXA2; targets APPL2 to endosomes and acting in parallel to RAB5A. Interacts with RAB31 (in GTP-bound form); interaction contributes to or enhances recruitment of APPL2 to the phagosomes; interaction enhances Fc-gamma receptor-mediated phagocytosis through PI3K/Akt signaling in macrophages. Interacts with PIK3R1; forms a complex with PIK3R1 and APPL1. Interacts (via BAR domain) with ADIPOR1; hinders the accessibility of APPL1 to ADIPOR1; negatively regulates adiponectin signaling; ADIPOQ dissociates this interaction and facilitates the recruitment of APPL1 to ADIPOR1. Interacts (via BAR domain) with ADIPOR2; ADIPOQ dissociates this interaction. In terms of tissue distribution, high levels in brain, heart, kidney and skeletal muscle.

It localises to the early endosome membrane. The protein resides in the nucleus. The protein localises to the cell membrane. It is found in the endosome membrane. Its subcellular location is the cytoplasm. It localises to the cytoplasmic vesicle. The protein resides in the phagosome. The protein localises to the cell projection. It is found in the ruffle. Its subcellular location is the ruffle membrane. It localises to the phagosome membrane. Multifunctional adapter protein that binds to various membrane receptors, nuclear factors and signaling proteins to regulate many processes, such as cell proliferation, immune response, endosomal trafficking and cell metabolism. Regulates signaling pathway leading to cell proliferation through interaction with RAB5A and subunits of the NuRD/MeCP1 complex. Plays a role in immune response by modulating phagocytosis, inflammatory and innate immune responses. In macrophages, enhances Fc-gamma receptor-mediated phagocytosis through interaction with RAB31 leading to activation of PI3K/Akt signaling. In response to LPS, modulates inflammatory responses by playing a key role on the regulation of TLR4 signaling and in the nuclear translocation of RELA/NF-kappa-B p65 and the secretion of pro- and anti-inflammatory cytokines. Also functions as a negative regulator of innate immune response via inhibition of AKT1 signaling pathway by forming a complex with APPL1 and PIK3R1. Plays a role in endosomal trafficking of TGFBR1 from the endosomes to the nucleus. Plays a role in cell metabolism by regulating adiponecting ans insulin signaling pathways and adaptative thermogenesis. In muscle, negatively regulates adiponectin-simulated glucose uptake and fatty acid oxidation by inhibiting adiponectin signaling pathway through APPL1 sequestration thereby antagonizing APPL1 action. In muscles, negatively regulates insulin-induced plasma membrane recruitment of GLUT4 and glucose uptake through interaction with TBC1D1. Plays a role in cold and diet-induced adaptive thermogenesis by activating ventromedial hypothalamus (VMH) neurons throught AMPK inhibition which enhances sympathetic outflow to subcutaneous white adipose tissue (sWAT), sWAT beiging and cold tolerance. Also plays a role in other signaling pathways namely Wnt/beta-catenin, HGF and glucocorticoid receptor signaling. Positive regulator of beta-catenin/TCF-dependent transcription through direct interaction with RUVBL2/reptin resulting in the relief of RUVBL2-mediated repression of beta-catenin/TCF target genes by modulating the interactions within the beta-catenin-reptin-HDAC complex. May affect adult neurogenesis in hippocampus and olfactory system via regulating the sensitivity of glucocorticoid receptor. Required for fibroblast migration through HGF cell signaling. The polypeptide is DCC-interacting protein 13-beta (Homo sapiens (Human)).